The following is a 423-amino-acid chain: UPF0229 protein PLES_05841 (423 aa).

Residues 84–107 form a disordered region; it reads AGEHIARPSGGGGGRGGGKASNSG. Residues 92-102 are compositionally biased toward gly residues; that stretch reads SGGGGGRGGGK.

Belongs to the UPF0229 family.

This chain is UPF0229 protein PLES_05841, found in Pseudomonas aeruginosa (strain LESB58).